Here is a 259-residue protein sequence, read N- to C-terminus: Glucosamine-6-phosphate deaminase (259 aa).

Asp66 serves as the catalytic Proton acceptor; for enolization step. Asp135 acts as the For ring-opening step in catalysis. His137 serves as the catalytic Proton acceptor; for ring-opening step. Glu142 serves as the catalytic For ring-opening step.

It belongs to the glucosamine/galactosamine-6-phosphate isomerase family. NagB subfamily.

The enzyme catalyses alpha-D-glucosamine 6-phosphate + H2O = beta-D-fructose 6-phosphate + NH4(+). The protein operates within amino-sugar metabolism; N-acetylneuraminate degradation; D-fructose 6-phosphate from N-acetylneuraminate: step 5/5. Functionally, catalyzes the reversible isomerization-deamination of glucosamine 6-phosphate (GlcN6P) to form fructose 6-phosphate (Fru6P) and ammonium ion. The polypeptide is Glucosamine-6-phosphate deaminase (Rhodococcus opacus (strain B4)).